The sequence spans 586 residues: Arginine--tRNA ligase (586 aa).

Positions 127-137 (PNVAKEMHVGH) match the 'HIGH' region motif.

The protein belongs to the class-I aminoacyl-tRNA synthetase family. Monomer.

The protein localises to the cytoplasm. It carries out the reaction tRNA(Arg) + L-arginine + ATP = L-arginyl-tRNA(Arg) + AMP + diphosphate. The chain is Arginine--tRNA ligase (argS) from Streptomyces coelicolor (strain ATCC BAA-471 / A3(2) / M145).